Consider the following 170-residue polypeptide: N-glycosidase R617 (170 aa).

It belongs to the YbiA family.

It carries out the reaction 2,5-diamino-6-hydroxy-4-(5-phosphoribosylamino)-pyrimidine + H2O = 2,5,6-triamino-4-hydroxypyrimidine + D-ribose 5-phosphate. The enzyme catalyses 5-amino-6-(5-phospho-D-ribosylamino)uracil + H2O = 5,6-diaminouracil + D-ribose 5-phosphate. Catalyzes the hydrolysis of the N-glycosidic bond in the first two intermediates of riboflavin biosynthesis, which are highly reactive metabolites, yielding relatively innocuous products. Thus, can divert a surplus of harmful intermediates into relatively harmless products and pre-empt the damage these intermediates would otherwise do. May act on other substrates in vivo. The chain is N-glycosidase R617 from Acanthamoeba polyphaga mimivirus (APMV).